Reading from the N-terminus, the 118-residue chain is Late cornified envelope protein 1B (118 aa).

The tract at residues 87–118 (CHRPQSSGCCSQPSGGSSCCGGGSGQHSGGCC) is disordered. A compositionally biased stretch (low complexity) spans 90 to 103 (PQSSGCCSQPSGGS). Residues 104–118 (SCCGGGSGQHSGGCC) show a composition bias toward gly residues.

The protein belongs to the LCE family. As to quaternary structure, interacts with CYSRT1; the interaction is direct. As to expression, skin-specific. Expression was readily detected in adult trunk skin, adult arm skin, fetal skin, penal skin, vulva, esophagus and tongue. Not expressed in the cervix, rectum, lung, colon, or placenta.

Its function is as follows. Precursors of the cornified envelope of the stratum corneum. The sequence is that of Late cornified envelope protein 1B (LCE1B) from Homo sapiens (Human).